Here is a 237-residue protein sequence, read N- to C-terminus: Aliphatic sulfonates import ATP-binding protein SsuB 1 (237 aa).

In terms of domain architecture, ABC transporter spans 5–221 (LMDIRVEHKA…PRDRRDPLLA (217 aa)). Residue 38–45 (GPSGCGKS) coordinates ATP.

Belongs to the ABC transporter superfamily. Aliphatic sulfonates importer (TC 3.A.1.17.2) family. As to quaternary structure, the complex is composed of two ATP-binding proteins (SsuB), two transmembrane proteins (SsuC) and a solute-binding protein (SsuA).

It is found in the cell inner membrane. It catalyses the reaction ATP + H2O + aliphatic sulfonate-[sulfonate-binding protein]Side 1 = ADP + phosphate + aliphatic sulfonateSide 2 + [sulfonate-binding protein]Side 1.. Functionally, part of the ABC transporter complex SsuABC involved in aliphatic sulfonates import. Responsible for energy coupling to the transport system. The chain is Aliphatic sulfonates import ATP-binding protein SsuB 1 from Pseudomonas syringae pv. syringae (strain B728a).